A 142-amino-acid chain; its full sequence is Transcriptional regulator MraZ (142 aa).

SpoVT-AbrB domains follow at residues 5-47 and 76-119; these read EYNH…PMEE and ANEI…SREK.

The protein belongs to the MraZ family. Forms oligomers.

The protein localises to the cytoplasm. It localises to the nucleoid. The chain is Transcriptional regulator MraZ from Clostridium tetani (strain Massachusetts / E88).